The sequence spans 517 residues: Superoxide-generating NADPH oxidase heavy chain subunit A (517 aa).

Over 1 to 19 (MRLPTKEEIQRYWVNEGNK) the chain is Cytoplasmic. The helical transmembrane segment at 20 to 40 (LILVILYTLGNIAAFVYTFVH) threads the bilayer. The Extracellular portion of the chain corresponds to 41–62 (YYNSPAFEVVGYGVCFARGCAQ). One can recognise a Ferric oxidoreductase domain in the interval 58-201 (RGCAQLLKLN…LFVVFFGLLV (144 aa)). Residues 63–83 (LLKLNCALILVPVLRNLLSFL) traverse the membrane as a helical segment. Residues 84 to 97 (RGTFLNNYVPFDKN) are Cytoplasmic-facing. Residues 98-118 (IVFHKLIAWVICFATFGHVMA) traverse the membrane as a helical segment. Heme is bound by residues H101 and H115. Residues 119-149 (HFNNFRLYQDITPQEYKRILGIDYPNLTPIK) lie on the Extracellular side of the membrane. Residues 150 to 170 (YAFATLAGWTGHVVCIVMVLM) traverse the membrane as a helical segment. The Cytoplasmic portion of the chain corresponds to 171 to 184 (YTSAVESIRRPMFE). The chain crosses the membrane as a helical span at residues 185-205 (GFWYTHHLFVVFFGLLVVHGL). Residues H190 and H203 each coordinate heme. Residue H206 is a topological domain, extracellular. The chain crosses the membrane as a helical span at residues 207-227 (SILEPTSFWKWVIGPCALYIV). Residues 228 to 517 (ERLIRLLRSK…CRFHYNKENF (290 aa)) are Cytoplasmic-facing. The FAD-binding FR-type domain maps to 229-349 (RLIRLLRSKK…DGPFGAASEE (121 aa)). 283-289 (HPFTITS) provides a ligand contact to FAD.

In terms of assembly, composed of a heavy chain and a light chain. The cofactor is FAD.

It localises to the membrane. Its function is as follows. Critical component of the membrane-bound oxidase that generates superoxide. It is the terminal component of a respiratory chain that transfers single electrons from cytoplasmic NADPH across the plasma membrane to molecular oxygen on the exterior. The sequence is that of Superoxide-generating NADPH oxidase heavy chain subunit A (noxA) from Dictyostelium discoideum (Social amoeba).